Reading from the N-terminus, the 481-residue chain is MGAFTKAAYFLLHPNQLRSIVQWKVWHEPVHRRDPSKETETEKACFRHLELTSRSFSAVIQELNPELLMPICLFYLVLRGLDTIEDDMTIDLAKKEPLLREFADLMEIDGWTFTENGPNEKDRELLVHFDDVIAELKKVKKPYYDIIREITVKMGNGMADYALNAEHNTNGVNTIEEYELYCHYVAGLVGEGLTRLFVESNLANPALLERMELTESMGQFLQKTNIIRDIHEDYVDKRRFWPKTIWSKYVNTWDDMFKPENREKALQCSSEMVLNALKHTEDCLFYMAGMRDQSVFNFVAIPQAMAIATLELVFRNPAIFERNVKITKGDACQLMMESTQNLRVVCEVFRRYARRIHKKNDPRDPNYLAISVQCGKIEQFIESIFPTQDPKKIALAQAQNSNQTAANTTDNGDTTFLVLSMIGVLFVMGGLMIGAAWLMGARFDMAYEDITARVGTLVNGAAAVSSATVSSIPTTVMHQEL.

Transmembrane regions (helical) follow at residues 294–314 and 416–436; these read SVFNFVAIPQAMAIATLELVF and FLVLSMIGVLFVMGGLMIGAA.

Belongs to the phytoene/squalene synthase family. Requires Mg(2+) as cofactor.

It localises to the endoplasmic reticulum membrane. The enzyme catalyses 2 (2E,6E)-farnesyl diphosphate + NADPH + H(+) = squalene + 2 diphosphate + NADP(+). The catalysed reaction is 2 (2E,6E)-farnesyl diphosphate + NADH + H(+) = squalene + 2 diphosphate + NAD(+). Its pathway is terpene metabolism; lanosterol biosynthesis; lanosterol from farnesyl diphosphate: step 1/3. Functionally, catalyzes the condensation of 2 two farnesyl pyrophosphate moieties to form squalene. It is the first committed enzyme of the sterol biosynthesis pathway. Required for the biosynthesis of ergosterol. This is Probable squalene synthase (erg-6) from Neurospora crassa (strain ATCC 24698 / 74-OR23-1A / CBS 708.71 / DSM 1257 / FGSC 987).